The sequence spans 631 residues: Phosphomethylpyrimidine synthase (631 aa).

Substrate-binding positions include Asn-239, Met-268, Tyr-297, His-333, 353–355 (SRG), 394–397 (DGLR), and Glu-433. His-437 serves as a coordination point for Zn(2+). Tyr-460 is a substrate binding site. His-501 is a Zn(2+) binding site. Cys-581, Cys-584, and Cys-589 together coordinate [4Fe-4S] cluster.

It belongs to the ThiC family. As to quaternary structure, homodimer. It depends on [4Fe-4S] cluster as a cofactor.

The enzyme catalyses 5-amino-1-(5-phospho-beta-D-ribosyl)imidazole + S-adenosyl-L-methionine = 4-amino-2-methyl-5-(phosphooxymethyl)pyrimidine + CO + 5'-deoxyadenosine + formate + L-methionine + 3 H(+). It participates in cofactor biosynthesis; thiamine diphosphate biosynthesis. Catalyzes the synthesis of the hydroxymethylpyrimidine phosphate (HMP-P) moiety of thiamine from aminoimidazole ribotide (AIR) in a radical S-adenosyl-L-methionine (SAM)-dependent reaction. The chain is Phosphomethylpyrimidine synthase from Escherichia coli O81 (strain ED1a).